The following is a 408-amino-acid chain: Zinc finger protein 764 (408 aa).

Positions V26 to C97 constitute a KRAB domain. The tract at residues D91–P167 is disordered. 7 consecutive C2H2-type zinc fingers follow at residues H175 to H197, F203 to H225, H231 to H253, Y259 to H281, F287 to H309, Y315 to H337, and Y343 to H365.

It belongs to the krueppel C2H2-type zinc-finger protein family. In terms of assembly, interacts (via KRAB domain) with NR3C1/GR (via NR LBD domain); the interaction regulates transcription factor activity of NR3C1 by directing its actions toward certain biologic pathways.

It localises to the nucleus. Zinc finger protein that functions as a cofactor for steroid hormone receptors, such as NR3C1/GR. Directs NR3C1/GR transcriptional activity toward specific biologic pathways by changing NR3C1/GR binding and transcriptional activity on the glucocorticoid-responsive genes. This chain is Zinc finger protein 764, found in Homo sapiens (Human).